The sequence spans 222 residues: 3-dehydroquinate dehydratase (222 aa).

Residues 32–34 (ELR) and Arg64 contribute to the 3-dehydroquinate site. The Proton donor/acceptor role is filled by His117. Lys143 acts as the Schiff-base intermediate with substrate in catalysis. Arg181 contributes to the 3-dehydroquinate binding site.

The protein belongs to the type-I 3-dehydroquinase family. Homodimer.

It carries out the reaction 3-dehydroquinate = 3-dehydroshikimate + H2O. Its pathway is metabolic intermediate biosynthesis; chorismate biosynthesis; chorismate from D-erythrose 4-phosphate and phosphoenolpyruvate: step 3/7. Involved in the third step of the chorismate pathway, which leads to the biosynthesis of aromatic amino acids. Catalyzes the cis-dehydration of 3-dehydroquinate (DHQ) and introduces the first double bond of the aromatic ring to yield 3-dehydroshikimate. In Aeropyrum pernix (strain ATCC 700893 / DSM 11879 / JCM 9820 / NBRC 100138 / K1), this protein is 3-dehydroquinate dehydratase.